The following is a 239-amino-acid chain: Purine nucleoside phosphorylase DeoD-type (239 aa).

His5 lines the a purine D-ribonucleoside pocket. Residues Gly21, Arg25, Arg44, and 88–91 (RVGS) each bind phosphate. Residues 180–182 (EME) and 204–205 (SD) each bind a purine D-ribonucleoside. Asp205 serves as the catalytic Proton donor.

It belongs to the PNP/UDP phosphorylase family. Homohexamer; trimer of homodimers.

The catalysed reaction is a purine D-ribonucleoside + phosphate = a purine nucleobase + alpha-D-ribose 1-phosphate. It catalyses the reaction a purine 2'-deoxy-D-ribonucleoside + phosphate = a purine nucleobase + 2-deoxy-alpha-D-ribose 1-phosphate. Functionally, catalyzes the reversible phosphorolytic breakdown of the N-glycosidic bond in the beta-(deoxy)ribonucleoside molecules, with the formation of the corresponding free purine bases and pentose-1-phosphate. This is Purine nucleoside phosphorylase DeoD-type from Cronobacter sakazakii (strain ATCC BAA-894) (Enterobacter sakazakii).